Consider the following 537-residue polypeptide: uncharacterized protein (537 aa).

4 disordered regions span residues 1 to 33 (MEPG…ILAF), 71 to 98 (SSPP…RKRQ), 197 to 220 (SHNN…SEEK), and 516 to 537 (GRQR…EEQN). At Ser-72 the chain carries Phosphoserine. The segment covering 88–98 (SRVDSEARKRQ) has biased composition (basic and acidic residues). The segment covering 197 to 214 (SHNNMASSNTQSNTQLSE) has biased composition (polar residues). Basic residues predominate over residues 516 to 529 (GRQRSSRYKSHVHK).

The protein belongs to the NAD kinase family.

This is an uncharacterized protein from Schizosaccharomyces pombe (strain 972 / ATCC 24843) (Fission yeast).